The following is a 193-amino-acid chain: Cysteine and glycine-rich protein 1 (193 aa).

One can recognise an LIM zinc-binding 1 domain in the interval 10-61; that stretch reads CGVCQKTVYFAEEVQCEGSSFHKSCFLCLVCKKNLDSTTVAVHGEEIYCKSC. Positions 64-69 match the Nuclear localization signal motif; it reads KKYGPK. Ser-81 bears the Phosphoserine mark. 5 positions are modified to N6-acetyllysine: Lys-84, Lys-112, Lys-131, Lys-137, and Lys-161. The region spanning 119 to 170 is the LIM zinc-binding 2 domain; the sequence is CPRCSQAVYAAEKVIGAGKSWHKSCFRCAKCGKGLESTTLADKDGEIYCKGC. Ser-192 bears the Phosphoserine mark.

As to quaternary structure, interacts with ASCC1; ASCC2 and TRIP4.

Its subcellular location is the nucleus. In terms of biological role, could play a role in neuronal development. In Bos taurus (Bovine), this protein is Cysteine and glycine-rich protein 1 (CSRP1).